The sequence spans 230 residues: Probable endonuclease C19F8.04c (230 aa).

A helical membrane pass occupies residues 10–27; that stretch reads AIIGTGLITTSIGGFFFL. The TNase-like domain occupies 55 to 216; the sequence is KTMFGYVTRV…KKKKLSLWSQ (162 aa). Arginine 104 is an active-site residue. Aspartate 109 is a Ca(2+) binding site. Catalysis depends on residues glutamate 112 and arginine 152.

It belongs to the LCL3 family.

Its subcellular location is the mitochondrion. It is found in the membrane. The protein is Probable endonuclease C19F8.04c of Schizosaccharomyces pombe (strain 972 / ATCC 24843) (Fission yeast).